Reading from the N-terminus, the 338-residue chain is Fructose-1,6-bisphosphatase class 1 1 (338 aa).

Positions 94, 116, 118, and 119 each coordinate Mg(2+). Substrate is bound by residues 119 to 122, Asn210, and Lys276; that span reads DGSS. Glu282 lines the Mg(2+) pocket.

Belongs to the FBPase class 1 family. As to quaternary structure, homotetramer. Requires Mg(2+) as cofactor.

The protein localises to the cytoplasm. It carries out the reaction beta-D-fructose 1,6-bisphosphate + H2O = beta-D-fructose 6-phosphate + phosphate. The protein operates within carbohydrate biosynthesis; gluconeogenesis. The sequence is that of Fructose-1,6-bisphosphatase class 1 1 from Paraburkholderia phymatum (strain DSM 17167 / CIP 108236 / LMG 21445 / STM815) (Burkholderia phymatum).